A 284-amino-acid polypeptide reads, in one-letter code: Deoxyribonuclease-1 (284 aa).

The N-terminal stretch at 1–22 (MRGARLMGALLALAGLLQGALA) is a signal peptide. N40 is a glycosylation site (N-linked (GlcNAc...) asparagine). E100 is a catalytic residue. C123 and C126 are disulfide-bonded. N-linked (GlcNAc...) asparagine glycosylation is present at N128. H156 is an active-site residue. C195 and C231 are joined by a disulfide.

Belongs to the DNase I family. Ca(2+) serves as cofactor. Mg(2+) is required as a cofactor. As to expression, highest expression in pancreas.

The protein localises to the secreted. It is found in the zymogen granule. It localises to the nucleus envelope. The enzyme catalyses Endonucleolytic cleavage to 5'-phosphodinucleotide and 5'-phosphooligonucleotide end-products.. Functionally, serum endocuclease secreted into body fluids by a wide variety of exocrine and endocrine organs. Expressed by non-hematopoietic tissues and preferentially cleaves protein-free DNA. Among other functions, seems to be involved in cell death by apoptosis. Binds specifically to G-actin and blocks actin polymerization. Together with DNASE1L3, plays a key role in degrading neutrophil extracellular traps (NETs). NETs are mainly composed of DNA fibers and are released by neutrophils to bind pathogens during inflammation. Degradation of intravascular NETs by DNASE1 and DNASE1L3 is required to prevent formation of clots that obstruct blood vessels and cause organ damage following inflammation. This Canis lupus familiaris (Dog) protein is Deoxyribonuclease-1 (DNASE1).